A 475-amino-acid chain; its full sequence is tRNA-2-methylthio-N(6)-dimethylallyladenosine synthase (475 aa).

One can recognise an MTTase N-terminal domain in the interval 7–127; the sequence is RKLHIKSYGC…LPKLLAKARD (121 aa). 6 residues coordinate [4Fe-4S] cluster: Cys16, Cys52, Cys90, Cys168, Cys172, and Cys175. Positions 154 to 388 constitute a Radical SAM core domain; that stretch reads RARGVSAFVT…AQLQALIDAQ (235 aa). Positions 394–456 constitute a TRAM domain; sequence RAAIGRTVEV…RYSLKGRLAS (63 aa).

Belongs to the methylthiotransferase family. MiaB subfamily. In terms of assembly, monomer. It depends on [4Fe-4S] cluster as a cofactor.

Its subcellular location is the cytoplasm. It carries out the reaction N(6)-dimethylallyladenosine(37) in tRNA + (sulfur carrier)-SH + AH2 + 2 S-adenosyl-L-methionine = 2-methylsulfanyl-N(6)-dimethylallyladenosine(37) in tRNA + (sulfur carrier)-H + 5'-deoxyadenosine + L-methionine + A + S-adenosyl-L-homocysteine + 2 H(+). Catalyzes the methylthiolation of N6-(dimethylallyl)adenosine (i(6)A), leading to the formation of 2-methylthio-N6-(dimethylallyl)adenosine (ms(2)i(6)A) at position 37 in tRNAs that read codons beginning with uridine. The protein is tRNA-2-methylthio-N(6)-dimethylallyladenosine synthase of Afipia carboxidovorans (strain ATCC 49405 / DSM 1227 / KCTC 32145 / OM5) (Oligotropha carboxidovorans).